Here is a 1241-residue protein sequence, read N- to C-terminus: ATP-dependent helicase/nuclease subunit A (1241 aa).

The region spanning 12-485 is the UvrD-like helicase ATP-binding domain; the sequence is SQWTDDQWKA…IDLAKNFRSR (474 aa). Residue 33 to 40 coordinates ATP; it reads AAAGSGKT. A UvrD-like helicase C-terminal domain is found at 505–805; that stretch reads GEIDYDADAE…RIMTIHKSKG (301 aa).

It belongs to the helicase family. AddA subfamily. Heterodimer of AddA and AddB/RexB. Requires Mg(2+) as cofactor.

It catalyses the reaction Couples ATP hydrolysis with the unwinding of duplex DNA by translocating in the 3'-5' direction.. It carries out the reaction ATP + H2O = ADP + phosphate + H(+). In terms of biological role, the heterodimer acts as both an ATP-dependent DNA helicase and an ATP-dependent, dual-direction single-stranded exonuclease. Recognizes the chi site generating a DNA molecule suitable for the initiation of homologous recombination. The AddA nuclease domain is required for chi fragment generation; this subunit has the helicase and 3' -&gt; 5' nuclease activities. The chain is ATP-dependent helicase/nuclease subunit A from Bacillus thuringiensis subsp. konkukian (strain 97-27).